The chain runs to 148 residues: Extracellular globin-2B (148 aa).

Residues 3 to 148 (CCSAADRHEV…IADVIKAELP (146 aa)) form the Globin domain. Cys-4 and Cys-135 form a disulfide bridge. His-98 contributes to the heme b binding site.

The protein belongs to the globin family. In terms of assembly, disulfide bonded trimer of chains IIA, IIB, and IIC.

The protein localises to the secreted. The sequence is that of Extracellular globin-2B from Tylorrhynchus heterochetus (Japanese palolo worm).